A 309-amino-acid polypeptide reads, in one-letter code: uncharacterized protein (309 aa).

It to S.pombe SpAC14C4.04.

This is an uncharacterized protein from Schizosaccharomyces pombe (strain 972 / ATCC 24843) (Fission yeast).